Reading from the N-terminus, the 115-residue chain is DNA-binding protein PYRAB09250 (115 aa).

The protein belongs to the PDCD5 family.

This Pyrococcus abyssi (strain GE5 / Orsay) protein is DNA-binding protein PYRAB09250.